The following is a 556-amino-acid chain: 2-isopropylmalate synthase (556 aa).

In terms of domain architecture, Pyruvate carboxyltransferase spans 33 to 307 (PIWCSSDLRD…DPELDFSDID (275 aa)). Mg(2+) is bound by residues D42, H246, H248, and N282. The segment at 439 to 556 (ANTPYALISH…SLSQTQAKAA (118 aa)) is regulatory domain.

The protein belongs to the alpha-IPM synthase/homocitrate synthase family. LeuA type 2 subfamily. In terms of assembly, homodimer. Mg(2+) serves as cofactor.

Its subcellular location is the cytoplasm. It carries out the reaction 3-methyl-2-oxobutanoate + acetyl-CoA + H2O = (2S)-2-isopropylmalate + CoA + H(+). Its pathway is amino-acid biosynthesis; L-leucine biosynthesis; L-leucine from 3-methyl-2-oxobutanoate: step 1/4. Its function is as follows. Catalyzes the condensation of the acetyl group of acetyl-CoA with 3-methyl-2-oxobutanoate (2-ketoisovalerate) to form 3-carboxy-3-hydroxy-4-methylpentanoate (2-isopropylmalate). This chain is 2-isopropylmalate synthase, found in Pseudomonas savastanoi pv. phaseolicola (strain 1448A / Race 6) (Pseudomonas syringae pv. phaseolicola (strain 1448A / Race 6)).